The following is a 224-amino-acid chain: NADH-quinone oxidoreductase subunit B (224 aa).

The [4Fe-4S] cluster site is built by C67, C68, C133, and C162. Residues 200–224 form a disordered region; sequence DMPAEKDRKRGERIKVTNLRTPDEI. Positions 201–224 are enriched in basic and acidic residues; the sequence is MPAEKDRKRGERIKVTNLRTPDEI.

Belongs to the complex I 20 kDa subunit family. NDH-1 is composed of 14 different subunits. Subunits NuoB, C, D, E, F, and G constitute the peripheral sector of the complex. [4Fe-4S] cluster is required as a cofactor.

It is found in the cell inner membrane. It carries out the reaction a quinone + NADH + 5 H(+)(in) = a quinol + NAD(+) + 4 H(+)(out). In terms of biological role, NDH-1 shuttles electrons from NADH, via FMN and iron-sulfur (Fe-S) centers, to quinones in the respiratory chain. The immediate electron acceptor for the enzyme in this species is believed to be ubiquinone. Couples the redox reaction to proton translocation (for every two electrons transferred, four hydrogen ions are translocated across the cytoplasmic membrane), and thus conserves the redox energy in a proton gradient. The chain is NADH-quinone oxidoreductase subunit B from Aeromonas salmonicida (strain A449).